The chain runs to 311 residues: Interleukin-20 receptor subunit beta (311 aa).

A signal peptide spans 1–29; sequence MQTFTMVLEEIWTSLFMWFFYALIPCLLT. At 30-233 the chain is on the extracellular side; it reads DEVAILPAPQ…VEVQGEAIPL (204 aa). Fibronectin type-III domains follow at residues 37-136 and 144-228; these read APQN…RNST and EITK…EVQG. Asparagine 40 is a glycosylation site (N-linked (GlcNAc...) asparagine). Cysteine 89 and cysteine 97 are joined by a disulfide. An N-linked (GlcNAc...) asparagine glycan is attached at asparagine 134. Residues cysteine 202 and cysteine 223 are joined by a disulfide bond. A helical membrane pass occupies residues 234–254; it reads VLALFAFVGFMLILVVVPLFV. At 255-311 the chain is on the cytoplasmic side; the sequence is WKMGRLLQYSCCPVVVLPDTLKITNSPQKLISCRREEVDACATAVMSPEELLRAWIS.

The protein belongs to the type II cytokine receptor family. Heterodimer with IL20RA and heterodimer with IL22RA1. As to expression, widely expressed with highest levels in skin and testis. Highly expressed in psoriatic skin.

The protein resides in the membrane. Functionally, the IL20RA/IL20RB dimer is a receptor for IL19, IL20 and IL24. The IL22RA1/IL20RB dimer is a receptor for IL20 and IL24. The polypeptide is Interleukin-20 receptor subunit beta (IL20RB) (Homo sapiens (Human)).